The sequence spans 250 residues: NADH-quinone oxidoreductase subunit C (250 aa).

The disordered stretch occupies residues 193–250 (GMTPPLPGDEKADMPPIDDPMVTEGPEDTGAGARANAKAAEGTPADPPAMDDEEEDDA). The segment covering 222–236 (GAGARANAKAAEGTP) has biased composition (low complexity). A compositionally biased stretch (acidic residues) spans 241–250 (AMDDEEEDDA).

This sequence belongs to the complex I 30 kDa subunit family. NDH-1 is composed of 14 different subunits. Subunits NuoB, C, D, E, F, and G constitute the peripheral sector of the complex.

It localises to the cell inner membrane. The catalysed reaction is a quinone + NADH + 5 H(+)(in) = a quinol + NAD(+) + 4 H(+)(out). Its function is as follows. NDH-1 shuttles electrons from NADH, via FMN and iron-sulfur (Fe-S) centers, to quinones in the respiratory chain. The immediate electron acceptor for the enzyme in this species is believed to be ubiquinone. Couples the redox reaction to proton translocation (for every two electrons transferred, four hydrogen ions are translocated across the cytoplasmic membrane), and thus conserves the redox energy in a proton gradient. In Erythrobacter litoralis (strain HTCC2594), this protein is NADH-quinone oxidoreductase subunit C.